The primary structure comprises 248 residues: Adenosylcobinamide-GDP ribazoletransferase (248 aa).

The next 7 membrane-spanning stretches (helical) occupy residues 24–44 (EINL…IGAW), 70–90 (IIIT…GLFS), 106–126 (VGAN…SLFL), 134–154 (IGWL…LLFA), 168–188 (IFLG…LVAL), 189–209 (GAFF…FTII), and 228–248 (AGGQ…WGLI).

The protein belongs to the CobS family. It depends on Mg(2+) as a cofactor.

It is found in the cell membrane. The enzyme catalyses alpha-ribazole + adenosylcob(III)inamide-GDP = adenosylcob(III)alamin + GMP + H(+). It catalyses the reaction alpha-ribazole 5'-phosphate + adenosylcob(III)inamide-GDP = adenosylcob(III)alamin 5'-phosphate + GMP + H(+). It participates in cofactor biosynthesis; adenosylcobalamin biosynthesis; adenosylcobalamin from cob(II)yrinate a,c-diamide: step 7/7. Functionally, joins adenosylcobinamide-GDP and alpha-ribazole to generate adenosylcobalamin (Ado-cobalamin). Also synthesizes adenosylcobalamin 5'-phosphate from adenosylcobinamide-GDP and alpha-ribazole 5'-phosphate. The polypeptide is Adenosylcobinamide-GDP ribazoletransferase (Listeria monocytogenes serotype 4b (strain F2365)).